A 1325-amino-acid polypeptide reads, in one-letter code: Clustered mitochondria protein homolog (1325 aa).

One can recognise a Clu domain in the interval 311-573 (PKHESDPMRT…RHTPMDVTWL (263 aa)). Disordered stretches follow at residues 893 to 937 (KHAE…PLRT), 1032 to 1063 (DSNQ…DDQL), and 1245 to 1325 (QHAR…AKRS). Basic residues predominate over residues 1265–1275 (SAHHHHHRHLH). Residues 1276–1285 (QQQQNSSSSP) are compositionally biased toward low complexity. A compositionally biased stretch (basic residues) spans 1314–1325 (AARKRAARAKRS).

It belongs to the CLU family. May associate with the eukaryotic translation initiation factor 3 (eIF-3) complex.

Its subcellular location is the cytoplasm. Its function is as follows. mRNA-binding protein involved in proper cytoplasmic distribution of mitochondria. The sequence is that of Clustered mitochondria protein homolog from Malassezia globosa (strain ATCC MYA-4612 / CBS 7966) (Dandruff-associated fungus).